A 262-amino-acid polypeptide reads, in one-letter code: Type III pantothenate kinase (262 aa).

9-16 (DAGNSRIK) provides a ligand contact to ATP. Residues Y96 and 103 to 106 (GSDR) each bind substrate. D105 functions as the Proton acceptor in the catalytic mechanism. T129 provides a ligand contact to ATP. T189 is a binding site for substrate.

This sequence belongs to the type III pantothenate kinase family. As to quaternary structure, homodimer. Requires NH4(+) as cofactor. K(+) serves as cofactor.

It is found in the cytoplasm. It catalyses the reaction (R)-pantothenate + ATP = (R)-4'-phosphopantothenate + ADP + H(+). It participates in cofactor biosynthesis; coenzyme A biosynthesis; CoA from (R)-pantothenate: step 1/5. In terms of biological role, catalyzes the phosphorylation of pantothenate (Pan), the first step in CoA biosynthesis. The sequence is that of Type III pantothenate kinase from Burkholderia vietnamiensis (strain G4 / LMG 22486) (Burkholderia cepacia (strain R1808)).